Reading from the N-terminus, the 71-residue chain is Beta-defensin 131A (71 aa).

A signal peptide spans 1-22 (MRVLFFVFGVLSLMFTVPPARS). Disulfide bonds link Cys29–Cys57, Cys37–Cys51, and Cys41–Cys58.

Belongs to the beta-defensin family.

It is found in the secreted. In terms of biological role, has antibacterial activity. Upon stimulation with lipoteichoic acid, promotes cytokines and chemokines production and secretion. This Pan troglodytes (Chimpanzee) protein is Beta-defensin 131A.